Here is a 419-residue protein sequence, read N- to C-terminus: Putative zinc metalloprotease spyM18_2031 (419 aa).

Position 18 (His18) interacts with Zn(2+). Glu19 is an active-site residue. Residue His22 participates in Zn(2+) binding. The next 4 membrane-spanning stretches (helical) occupy residues 169-191 (LITN…ILLV), 301-323 (LAWS…FSLN), 343-365 (LESV…LIPI), and 392-411 (AYIT…AVTW). The PDZ domain maps to 175 to 274 (GPMNNFILGI…LKTVAVKPQK (100 aa)).

The protein belongs to the peptidase M50B family. Zn(2+) serves as cofactor.

It is found in the cell membrane. In Streptococcus pyogenes serotype M18 (strain MGAS8232), this protein is Putative zinc metalloprotease spyM18_2031.